Consider the following 323-residue polypeptide: o-succinylbenzoate synthase (323 aa).

Lys-134 (proton donor) is an active-site residue. Residues Asp-162, Glu-191, and Asp-214 each coordinate Mg(2+). The active-site Proton acceptor is the Lys-236.

The protein belongs to the mandelate racemase/muconate lactonizing enzyme family. MenC type 1 subfamily. The cofactor is a divalent metal cation.

The catalysed reaction is (1R,6R)-6-hydroxy-2-succinyl-cyclohexa-2,4-diene-1-carboxylate = 2-succinylbenzoate + H2O. Its pathway is quinol/quinone metabolism; 1,4-dihydroxy-2-naphthoate biosynthesis; 1,4-dihydroxy-2-naphthoate from chorismate: step 4/7. The protein operates within quinol/quinone metabolism; menaquinone biosynthesis. In terms of biological role, converts 2-succinyl-6-hydroxy-2,4-cyclohexadiene-1-carboxylate (SHCHC) to 2-succinylbenzoate (OSB). The chain is o-succinylbenzoate synthase from Photorhabdus laumondii subsp. laumondii (strain DSM 15139 / CIP 105565 / TT01) (Photorhabdus luminescens subsp. laumondii).